A 993-amino-acid polypeptide reads, in one-letter code: UPF0182 protein MAV_4137 (993 aa).

The next 7 membrane-spanning stretches (helical) occupy residues 18-38, 63-83, 113-133, 175-195, 210-230, 254-274, and 287-307; these read ILIL…RLID, FVVF…GLAV, LVSI…AQSY, FVAV…FGGI, IQLV…YWLD, AVLP…AAVF, and IGLV…PLIV. The segment at 903 to 941 is disordered; that stretch reads NIQPTEGGAPAASPPANAPAPAVTPGSAPPVAAPPVPDG. The segment covering 929–939 has biased composition (pro residues); sequence SAPPVAAPPVP.

The protein belongs to the UPF0182 family.

It is found in the cell membrane. This chain is UPF0182 protein MAV_4137, found in Mycobacterium avium (strain 104).